Consider the following 155-residue polypeptide: Putative pre-16S rRNA nuclease (155 aa).

The disordered stretch occupies residues 136–155 (DAERATSRPPGHPVEPRIGP).

The protein belongs to the YqgF nuclease family.

The protein resides in the cytoplasm. Could be a nuclease involved in processing of the 5'-end of pre-16S rRNA. This chain is Putative pre-16S rRNA nuclease, found in Leifsonia xyli subsp. xyli (strain CTCB07).